We begin with the raw amino-acid sequence, 509 residues long: Ribonuclease Y (509 aa).

The helical transmembrane segment at 5–25 (IAGVSGIAGAAVGAGACYLWL) threads the bilayer. The 67-residue stretch at 199–265 (LINLVNLPSD…TRVIEILIED (67 aa)) folds into the KH domain. In terms of domain architecture, HD spans 325-418 (ALAHTLEVAK…VCAADTLSAA (94 aa)).

This sequence belongs to the RNase Y family.

The protein resides in the cell membrane. In terms of biological role, endoribonuclease that initiates mRNA decay. The sequence is that of Ribonuclease Y from Sulfurovum sp. (strain NBC37-1).